The sequence spans 525 residues: GMP synthase [glutamine-hydrolyzing] (525 aa).

One can recognise a Glutamine amidotransferase type-1 domain in the interval 9–207; that stretch reads RILILDFGSQ…VLDICQCEAL (199 aa). The active-site Nucleophile is the C86. Active-site residues include H181 and E183. Positions 208–400 constitute a GMPS ATP-PPase domain; the sequence is WTPAKIIDDA…LGLPYNMLYR (193 aa). An ATP-binding site is contributed by 235-241; sequence SGGVDSS.

In terms of assembly, homodimer.

It catalyses the reaction XMP + L-glutamine + ATP + H2O = GMP + L-glutamate + AMP + diphosphate + 2 H(+). It functions in the pathway purine metabolism; GMP biosynthesis; GMP from XMP (L-Gln route): step 1/1. Functionally, catalyzes the synthesis of GMP from XMP. The protein is GMP synthase [glutamine-hydrolyzing] of Pectobacterium atrosepticum (strain SCRI 1043 / ATCC BAA-672) (Erwinia carotovora subsp. atroseptica).